The sequence spans 635 residues: Factor of DNA methylation 2 (635 aa).

Positions 289 to 471 form a coiled coil; that stretch reads LDEKKNLHQA…ESMNSVLMTK (183 aa). Residues 350-365 show a composition bias toward basic and acidic residues; it reads ELERQKLDEDKRKSDA. Residues 350-376 form a disordered region; it reads ELERQKLDEDKRKSDAMNKSLQLASRE.

As to quaternary structure, forms a complex with IDN2 and FMD1/INDL1. Highly expressed in flowers and at lower levels in roots, leaves and stems.

Its function is as follows. Forms a complex with IDN2 and FDM1/IDNL1 that is required for RNA-directed DNA methylation (RdDM) and that functions at a downstream step of the RdDM pathway. The polypeptide is Factor of DNA methylation 2 (Arabidopsis thaliana (Mouse-ear cress)).